Reading from the N-terminus, the 274-residue chain is Sulfur carrier protein FdhD (274 aa).

Residue cysteine 120 is the Cysteine persulfide intermediate of the active site.

The protein belongs to the FdhD family.

It is found in the cytoplasm. Functionally, required for formate dehydrogenase (FDH) activity. Acts as a sulfur carrier protein that transfers sulfur from IscS to the molybdenum cofactor prior to its insertion into FDH. This chain is Sulfur carrier protein FdhD, found in Burkholderia mallei (strain ATCC 23344).